Here is a 581-residue protein sequence, read N- to C-terminus: Urease subunit alpha (581 aa).

The Urease domain maps to 134–581 (GGFDSHIHFI…LPMTQRYFLF (448 aa)). Residues His139, His141, and Lys222 each coordinate Ni(2+). At Lys222 the chain carries N6-carboxylysine. Residue His224 participates in substrate binding. Residues His251 and His277 each coordinate Ni(2+). The active-site Proton donor is the His325. Asp365 is a Ni(2+) binding site.

This sequence belongs to the metallo-dependent hydrolases superfamily. Urease alpha subunit family. In terms of assembly, heterotrimer of UreA (gamma), UreB (beta) and UreC (alpha) subunits. Three heterotrimers associate to form the active enzyme. Ni cation serves as cofactor. Post-translationally, carboxylation allows a single lysine to coordinate two nickel ions.

Its subcellular location is the cytoplasm. The catalysed reaction is urea + 2 H2O + H(+) = hydrogencarbonate + 2 NH4(+). It participates in nitrogen metabolism; urea degradation; CO(2) and NH(3) from urea (urease route): step 1/1. The protein is Urease subunit alpha of Albidiferax ferrireducens (strain ATCC BAA-621 / DSM 15236 / T118) (Rhodoferax ferrireducens).